The following is a 481-amino-acid chain: Cytochrome P450 monooygenase 2 (481 aa).

Residues 12-32 (GSQLLPFYIAIFVFTLVPWAI) form a helical membrane-spanning segment. Cys-418 provides a ligand contact to heme.

It belongs to the cytochrome P450 family. Heme is required as a cofactor.

It is found in the membrane. It participates in plant hormone biosynthesis; gibberellin biosynthesis. In terms of biological role, gibberellin 20-oxidase; part of the gene cluster that mediates the biosynthesis of gibberellins (GAs), diterpenoids that may provide a selective advantage during infection of the preferred host plant, rice. Gibberellins (GAs) are diterpenoids and are synthesized via the mevalonate pathway. Biosynthesis of the major metabolite GA3 (gibberellic acid) from geranylgeranyl diphosphate (GGPP) requires 13 steps. The GGPP produced by the geranylgeranyl diphosphate synthase GGS2 is converted to ent-kaurene via ent-copalyldiphosphate in a two-step cyclization reaction performed by the bifunctional ent-copalyl diphosphate synthase/ent-kaurene synthase enzyme (CPS/KS). Ent-Kaurene is metabolized to GAs by a series of oxidation reactions catalyzed by cytochrome P450 monooxygenases. Cytochrome P450 monooxygenase P450-4 is an ent-kaurene oxidase that catalyzes the three oxidation steps between ent-kaurene and ent-kaurenoic acid. The highly multifunctional cytochrome P450 monooxygenase P450-1 then catalyzes four steps involving oxidation at two carbon atoms, in the main pathway from ent-kaurenoic acid to GA14 via GA12-aldehyde as well as producing kaurenolides and fujenoic acids as by-products. The cytochrome P450 monooxygenase P450-2 then converts GA14 to GA4 by removal of C-20. GA4 is further converted to GA7 by the GA4 desaturase DES via 1,2-desaturation before cytochrome P450 monooxygenase P450-3, a 13-hydroxylase, hydroxylates GA7 to GA3, the final product of the GA-biosynthetic pathway. The chain is Cytochrome P450 monooygenase 2 from Gibberella fujikuroi (strain CBS 195.34 / IMI 58289 / NRRL A-6831) (Bakanae and foot rot disease fungus).